The primary structure comprises 755 residues: Metabotropic glutamate receptor-like protein B (755 aa).

An N-terminal signal peptide occupies residues 1–23; it reads MKNLISIILLILIFFNYSKFVKS. N-linked (GlcNAc...) asparagine glycosylation is found at Asn16, Asn183, and Asn273. The Extracellular segment spans residues 24–385; that stretch reads KNCKIAVLLS…VDYSSSMKLG (362 aa). Residues 386-406 traverse the membrane as a helical segment; that stretch reads ITITSSICIFLCIISIIIVLV. Residues 407-417 lie on the Cytoplasmic side of the membrane; it reads FRTARIIKSAS. The helical transmembrane segment at 418–438 threads the bilayer; that stretch reads PAFLFLILMGCILIFIGCIIF. Residues 439 to 455 lie on the Extracellular side of the membrane; sequence SQSPNEGTCRARVWLLS. A helical transmembrane segment spans residues 456–476; that stretch reads IGYTIFLGSLLVKNWRIWLLF. Residues 477 to 492 are Cytoplasmic-facing; sequence DNPKLKKRSITNWKLY. The helical transmembrane segment at 493-513 threads the bilayer; the sequence is PWVAGILAADVLILAFWQGLG. Topologically, residues 514–541 are extracellular; that stretch reads NIRSESRIGIDSLTKYQYTNVCSSNDQG. The chain crosses the membrane as a helical span at residues 542 to 562; that stretch reads SIALYILLVFHGIKLLVACFI. Residues 563-578 are Cytoplasmic-facing; the sequence is SFKIKVVDIDEFNESK. Residues 579–599 form a helical membrane-spanning segment; it reads PIASSVYIITFCLFIVIPLMV. The Extracellular segment spans residues 600–607; the sequence is SPQSVTSQ. The chain crosses the membrane as a helical span at residues 608–628; the sequence is VTTICVCAIVTTLISIILLFG. At 629-755 the chain is on the cytoplasmic side; it reads SKFYKMITQG…GEVEIDSNNL (127 aa). Disordered regions lie at residues 656–676 and 691–729; these read QSLE…EENG and FSSD…NIEE. The span at 694-710 shows a compositional bias: acidic residues; sequence DTEDDENETQQIDEEKD.

In the N-terminal section; belongs to the BMP lipoprotein family. The protein in the C-terminal section; belongs to the G-protein coupled receptor 3 family. GABA-B receptor subfamily.

The protein localises to the membrane. This is Metabotropic glutamate receptor-like protein B (grlB) from Dictyostelium discoideum (Social amoeba).